A 215-amino-acid chain; its full sequence is Adenylate kinase (215 aa).

ATP is bound at residue 10–15; it reads GAGKGT. The interval 30–59 is NMP; sequence STGDIFRDAVNQGSELGQEAQKYMSSGQLV. AMP-binding positions include Thr31, Arg36, 57 to 59, 85 to 88, and Gln92; these read QLV and GFPR. Residues 126-163 form an LID region; sequence GRISCRECKRVYNLNFNPPREQGKCDSCGGELVQRNDD. Arg127 contacts ATP. 2 residues coordinate Zn(2+): Cys130 and Cys133. 136–137 contributes to the ATP binding site; sequence VY. Zn(2+)-binding residues include Cys150 and Cys153. AMP contacts are provided by Arg160 and Arg171. Arg199 lines the ATP pocket.

It belongs to the adenylate kinase family. As to quaternary structure, monomer.

It is found in the cytoplasm. It carries out the reaction AMP + ATP = 2 ADP. The protein operates within purine metabolism; AMP biosynthesis via salvage pathway; AMP from ADP: step 1/1. Its function is as follows. Catalyzes the reversible transfer of the terminal phosphate group between ATP and AMP. Plays an important role in cellular energy homeostasis and in adenine nucleotide metabolism. The polypeptide is Adenylate kinase (Syntrophomonas wolfei subsp. wolfei (strain DSM 2245B / Goettingen)).